The chain runs to 265 residues: Phosphonoacetaldehyde hydrolase (265 aa).

The active-site Nucleophile is the Asp-10. Positions 10 and 12 each coordinate Mg(2+). Residue Lys-51 is the Schiff-base intermediate with substrate of the active site. Asp-184 lines the Mg(2+) pocket.

Belongs to the HAD-like hydrolase superfamily. PhnX family. In terms of assembly, homodimer. Mg(2+) serves as cofactor.

It carries out the reaction phosphonoacetaldehyde + H2O = acetaldehyde + phosphate + H(+). In terms of biological role, involved in phosphonate degradation. This chain is Phosphonoacetaldehyde hydrolase, found in Latilactobacillus sakei subsp. sakei (strain 23K) (Lactobacillus sakei subsp. sakei).